The following is a 442-amino-acid chain: MEVPFTIPGDQVNAILYKKTKDKYLSRLSKVTMPSNNRIDALCMHFGSCGGCCWQQLPYELQLKQKEKSIQNLFKPYLNENVKWHSIIPSSPWHYRNKMELTFSSDKAGRRYLGLIMQGTRGHVFQMKECLLANGWFAQAARAIQKWWDNSDVQAYHAIKDRGSLRTLTLREGLRTGDRLVMLTVSGNPDYALTKSQLQSFVQVLRDSIELSNSDQKLSVFLRIQQIAKGRPTNFYEMLLYGPDHIREKLYLPDFNEAIQTLNFRISPSAFFQPNTEQAEKLYSQALKLADLSASHVVYDLYCGTGTLGICSAKYVKEVIGIELSRESVLDARENVKENGLSNVTIKSGDVGQVLEALSQENSLKPDVVMVDPPRIGLDAKAIKHILDLKAPKLVYISCNPKTQVMNLGPLIDGGYQLQIVQPVDQFPQTVHVENITLLTLP.

[4Fe-4S] cluster is bound by residues cysteine 43, cysteine 49, cysteine 52, and cysteine 130. 4 residues coordinate S-adenosyl-L-methionine: glutamine 273, tyrosine 302, glutamate 323, and aspartate 372. Catalysis depends on cysteine 399, which acts as the Nucleophile.

This sequence belongs to the class I-like SAM-binding methyltransferase superfamily. RNA M5U methyltransferase family.

This is an uncharacterized protein from Protochlamydia amoebophila (strain UWE25).